The sequence spans 2042 residues: MAEDTEYKKLPVEERCVHKLWKARVDGYEEAAKIFRELDDEKSPEWSKFAGLIKKMVVDSNALAQEKGLEAALIFVENSGLAGRTVGDVMTGIVQKCIAAPKTKTKELSVQVALMYVEIEKQEAVVEELVKGMEAKNPKIVSACVAATTLALREFGHKVIGVKPLIKKLAPLMSDRDKTVRDEGKQLAVEIYRWIGAAMKAQISTLPQVTLKELEDEFDKLKGERVEPSRYLKSQQEKQAKIADAAATEDAYNEDDGEAGVEEIDPMDLLDPVDILSKMPKDFYDKLEEKKWTLRKESLEVLEKLLTDHPKLENGEYGALVSALKKVITKDSNVVLVAMAGKCLALLAKGLAKRFSNYASACVPSLLEKFKEKKPNVVTALREAIDAIYASTSLEAQQESIVESLSNKNPSVKSETALFIARALTRTQPTALNKKLLKLLTTSLVKTLNEPDPTVRDSSAEALGTLIKLMGDKAVTPLLADVDPLKMAKIKECQEKAEIKIKVAGPKKETRPASAPTAKAAAPAKTVAGSVDPKPVTRPATTGARKVLKKPATVSGGGATSAPTAALKAGGKPLATEREITPEELQEKSEEILPAEILNGLVDSNWKNRLAAVEQLLGEISGFDAKQAGISQILIRTISGRKPGLKEMNFQVLKFKLDIIRSVAENYPLTTTTVDLVINEIIEKLADAKNGAAAADVLSAFAEATKLEYVVGKVLSFAFEQKSPKVQSEAFNWVNRSIIEFGFQLQPKTLIEDVRKGVQSTNPTVRASAIQMVGTMSMYMGKALMMFFDSEKPALKSQIQVEFDKNVGEKPPKPVRGVQRSSGGTAGNSPDNEDDDGGAAGEEEPINMADLLPRVDIAPQITEALLKEMSDKDWKTRNEGLTKLQAIISEARLIKPSIGDLAPALAHRLVDSNAKIAQTTLAICEQLATAMGAGCRNHVRNLFPGFLHALGDNKSFVRAAALNCINSFGEKGGYKEFFESEMIADALKGGSPALKTELWAWLADKLPGLPPKSVSKEDIHSMVPHLYAHICDRNADVRKNANEAVLGIMIHLGFDAMNRALDKQKPASKKDILAALEKARPNLPVKPLPKGKHQAPIPEEPKLKTVRGGGAGGAPGIQKSATARVAGGQDKQVPARKKDEDIDTSPLLCANSAKNQRLLDEQKMKVLKWTFVTPREEFTELLRDQMMTANVNKALIANMFHDDFRYHLKVIEQLSEDLAGNSKALVCNLDLILKWLTLRFYDTNPSVLIKGLEYLVQVFQVLIDEEYILAENEGSSFVPHLLLKIGDPKDAVRNGVRRVLRQVILVFPFVKVFGYVMEGLKSKNARQRTECLDELTFLIESYGMNICPQSAVREIARQISDRDNSVRNAALNCIVQVFFLSGEKTYKMIGHLNEKDLSMLDERIKRAKKTKKPTPPPSVDVPAPQRHDSIEIEDAEVGNGCDELPPPDEDGTFDQAPSSQLLLLQQQLQQLQQQAQQQKPSGPFGLDSQVISEIEKDWVRVDQMEQKPLLNVDISSLDEPIKVRPTRAGIHYPQEKFDRLISRQHYMQQTLTTSPSSTAGMTSGVSPYRSPMRLQHQQPQQQLENNIPNLADVLPKHDPQLVKVIKGVSSTDTLKARAAINELAAIIEAPEKQAVLRDYEEIFIQNVLAQFKNLSQIPSAQSVVVYQPLLSILYTFFHANILGKTLSVACIKNLMSALLNLMADPKLAVGDDSQYNKVINGICLKVLDKVDFTNLNCALIRLLRETCPEAKLPKFTDLLMKCIWRNVKMLPERSNELNYDAVILEVHEFMLALPSTWWQNRPSDTPMRTIKTILHNMAKVKGNAILQHLNQIPTHSELHTYLIRILKNFQKDGSASGIGASPQRAKEIASKRISHQTHDTVSQIFKLISDRDTKQQGLQKLYDFKQQNPDIDLSTFLQGSSAPFHKYIEEGLAEIERNQNAGSTQDNRTDVNYQNNGPDPDFWMDRLQYHMTGGAAKLASARSADDGSHMLDNKVVDENLCLNGMNAQKASLIKREKRDMSPNRLQHLQAKLAQIKKENHAQ.

TOG regions lie at residues 1–229 (MAED…VEPS) and 267–505 (MDLL…KVAG). Positions 1–505 (MAEDTEYKKL…KAEIKIKVAG (505 aa)) are binds tubulin. Promotes microtubule polymerization regions lie at residues 1–516 (MAED…ASAP) and 581–1080 (TPEE…EKAR). HEAT repeat units lie at residues 120–157 (EKQEAVVEELVKGMEAKNPKIVSACVAATTLALREFGH), 160–197 (IGVKPLIKKLAPLMSDRDKTVRDEGKQLAVEIYRWIGA), 270–311 (LDPV…DHPK), 315–353 (GEYGALVSALKKVITKDSNVVLVAMAGKCLALLAKGLAK), 357–394 (NYASACVPSLLEKFKEKKPNVVTALREAIDAIYASTSL), 396–433 (AQQESIVESLSNKNPSVKSETALFIARALTRTQPTALN), and 440–478 (LTTSLVKTLNEPDPTVRDSSAEALGTLIKLMGDKAVTPL). The tract at residues 498–821 (EIKIKVAGPK…PKPVRGVQRS (324 aa)) is association with microtubule lattice. Residues 506–572 (PKKETRPASA…PTAALKAGGK (67 aa)) form a disordered region. Low complexity predominate over residues 513–531 (ASAPTAKAAAPAKTVAGSV). Positions 581–814 (TPEELQEKSE…KNVGEKPPKP (234 aa)) are TOG 3. HEAT repeat units lie at residues 587-624 (EKSEEILPAEILNGLVDSNWKNRLAAVEQLLGEISGFD), 625-662 (AKQAGISQILIRTISGRKPGLKEMNFQVLKFKLDIIRS), 672-710 (TTVDLVINEIIEKLADAKNGAAAADVLSAFAEATKLEYV), and 745-782 (LQPKTLIEDVRKGVQSTNPTVRASAIQMVGTMSMYMGK). A disordered region spans residues 804-849 (DKNVGEKPPKPVRGVQRSSGGTAGNSPDNEDDDGGAAGEEEPINMA). The span at 819 to 830 (QRSSGGTAGNSP) shows a compositional bias: polar residues. The span at 831 to 845 (DNEDDDGGAAGEEEP) shows a compositional bias: acidic residues. TOG stretches follow at residues 849–1087 (ADLL…PVKP) and 1179–1415 (TELL…KPTP). HEAT repeat units lie at residues 856–893 (DIAPQITEALLKEMSDKDWKTRNEGLTKLQAIISEARL), 896–933 (PSIGDLAPALAHRLVDSNAKIAQTTLAICEQLATAMGA), 937–974 (NHVRNLFPGFLHALGDNKSFVRAAALNCINSFGEKGGY), and 1017–1054 (EDIHSMVPHLYAHICDRNADVRKNANEAVLGIMIHLGF). The disordered stretch occupies residues 1083-1140 (LPVKPLPKGKHQAPIPEEPKLKTVRGGGAGGAPGIQKSATARVAGGQDKQVPARKKDE). Residues 1099-1428 (EEPKLKTVRG…VDVPAPQRHD (330 aa)) form an association with microtubule lattice region. 4 HEAT repeats span residues 1205-1242 (RYHLKVIEQLSEDLAGNSKALVCNLDLILKWLTLRFYD), 1272-1309 (NEGSSFVPHLLLKIGDPKDAVRNGVRRVLRQVILVFPF), 1311-1344 (KVFGYVMEGLKSKNARQRTECLDELTFLIESYGM), and 1346-1383 (ICPQSAVREIARQISDRDNSVRNAALNCIVQVFFLSGE). Disordered stretches follow at residues 1407–1455 (AKKT…TFDQ) and 1940–1959 (NAGSTQDNRTDVNYQNNGPD). The segment covering 1940 to 1957 (NAGSTQDNRTDVNYQNNG) has biased composition (polar residues).

The protein belongs to the TOG/XMAP215 family. As to quaternary structure, interacts with tacc, dgt6. Interacts with mv. Interacts with Patronin.

Its subcellular location is the cytoplasm. The protein localises to the cytoskeleton. It is found in the microtubule organizing center. The protein resides in the centrosome. It localises to the spindle. Its subcellular location is the perinuclear region. Functionally, binds to the plus end of microtubules and regulates microtubule dynamics and microtubule organization. Function in neurons is essential for adult survival, and is important for climbing behavior and activity. Promotes cytoplasmic microtubule nucleation and elongation. May act as a microtubule antipause factor that rapidly catalyzes the transition from pause to either growth or shrinkage. Involved in mitotic spindle elongation. Involved in the establishment of cell polarity and mitotic spindle orientation in neuroblasts. Required for maintaining the bipolarity of acentrosomal meiotic spindles; the function is dependent on tacc and involves ncd. Involved in oocyte microtubule cytoskeleton organization and bicoid mRNA localization. Seems to be involved in elongation of kinetochore-derived microtubule fibers. In fat body cells, essential component of perinuclear non-centrosomal microtubule-organizing centers (ncMTOCs) which function to accommodate the organization of microtubule (MT) networks to control nuclear positioning and dynein motor-based retrograde endosomal trafficking. Within the ncMTOCs, Msp300 and shot anchors the ncMTOC at the nuclear surface and recruits the MT minus-end regulators Patronin and Nin for assembly, anchoring and/or stabilization of circumferential and radial MTs at the ncMTOCs. Patronin, and perhaps Nin, then recruits msps to the ncMTOC where it is required for the gamma-tubulin-independent elongation and assembly of radial MTs. This chain is Protein mini spindles (msps), found in Drosophila melanogaster (Fruit fly).